An 876-amino-acid polypeptide reads, in one-letter code: Neurotrypsin (876 aa).

Positions M1–G20 are cleaved as a signal peptide. N26 carries an N-linked (GlcNAc...) asparagine glycan. A disordered region spans residues L29 to P89. Positions Y43–P54 are enriched in low complexity. A compositionally biased stretch (pro residues) spans T57–A72. The 73-residue stretch at C94 to C166 folds into the Kringle domain. 20 disulfides stabilise this stretch: C94–C166, C110–C150, C139–C164, C196–C260, C209–C270, C240–C250, C306–C370, C319–C380, C350–C360, C413–C476, C426–C486, C456–C466, C526–C590, C539–C600, C570–C580, C620–C751, C662–C678, C766–C832, C795–C809, and C822–C851. SRCR domains lie at V171–F272, I281–P382, I388–P488, and V501–Y602. Residues C620–R631 form a zymogen activation region region. A Peptidase S1 domain is found at I632–K875. H677 (charge relay system) is an active-site residue. N684 carries N-linked (GlcNAc...) asparagine glycosylation. The Charge relay system role is filled by D727. Residue S826 is the Charge relay system of the active site.

Belongs to the peptidase S1 family.

The protein localises to the secreted. Its function is as follows. Plays a role in neuronal plasticity and the proteolytic action may subserve structural reorganizations associated with learning and memory operations. This is Neurotrypsin (PRSS12) from Gorilla gorilla gorilla (Western lowland gorilla).